We begin with the raw amino-acid sequence, 553 residues long: NAD(P)H-quinone oxidoreductase chain 4 2 (553 aa).

A run of 14 helical transmembrane segments spans residues 6 to 26 (FPWL…IPVI), 34 to 54 (VRWF…YVFL), 87 to 107 (ISAP…LAAW), 115 to 135 (LFYF…VAQD), 136 to 156 (LLLF…LVSI), 169 to 189 (FLLY…AMAL), 210 to 230 (ALEL…LAIF), 244 to 264 (SAPV…YGLI), 276 to 296 (IYFA…GAFA), 312 to 332 (VSHM…GISG), 333 to 353 (AMLQ…LAGV), 376 to 396 (VFAL…MSGF), 418 to 438 (VVTV…LLSM), and 487 to 507 (IFIA…PQLA).

Belongs to the complex I subunit 4 family.

It is found in the cellular thylakoid membrane. It carries out the reaction a plastoquinone + NADH + (n+1) H(+)(in) = a plastoquinol + NAD(+) + n H(+)(out). The catalysed reaction is a plastoquinone + NADPH + (n+1) H(+)(in) = a plastoquinol + NADP(+) + n H(+)(out). In terms of biological role, NDH-1 shuttles electrons from NAD(P)H, via FMN and iron-sulfur (Fe-S) centers, to quinones in the respiratory chain. The immediate electron acceptor for the enzyme in this species is believed to be plastoquinone. Couples the redox reaction to proton translocation (for every two electrons transferred, four hydrogen ions are translocated across the cytoplasmic membrane), and thus conserves the redox energy in a proton gradient. This is NAD(P)H-quinone oxidoreductase chain 4 2 from Microcystis aeruginosa (strain NIES-843 / IAM M-2473).